The sequence spans 148 residues: uncharacterized protein (148 aa).

Low complexity predominate over residues 1–17 (MCPPVRQRPAQAPPAKR). Disordered stretches follow at residues 1–86 (MCPP…VQSP) and 122–148 (RAHR…TSPC). The span at 38 to 57 (RPPKMQRRPRPPVAKRRRFP) shows a compositional bias: basic residues. A compositionally biased stretch (polar residues) spans 134–148 (QSRQRPSPDSQTSPC).

Belongs to the Epstein-Barr virus BLLF2 family.

This is an uncharacterized protein from Homo sapiens (Human).